The following is a 921-amino-acid chain: Isoleucine--tRNA ligase (921 aa).

A 'HIGH' region motif is present at residues 57–67 (PYANGDIHMGH). Residue Glu-552 coordinates L-isoleucyl-5'-AMP. The short motif at 593-597 (KMSKS) is the 'KMSKS' region element. Lys-596 provides a ligand contact to ATP. Residues Cys-888, Cys-891, Cys-908, and Cys-911 each contribute to the Zn(2+) site.

This sequence belongs to the class-I aminoacyl-tRNA synthetase family. IleS type 1 subfamily. As to quaternary structure, monomer. Requires Zn(2+) as cofactor.

It is found in the cytoplasm. It catalyses the reaction tRNA(Ile) + L-isoleucine + ATP = L-isoleucyl-tRNA(Ile) + AMP + diphosphate. Functionally, catalyzes the attachment of isoleucine to tRNA(Ile). As IleRS can inadvertently accommodate and process structurally similar amino acids such as valine, to avoid such errors it has two additional distinct tRNA(Ile)-dependent editing activities. One activity is designated as 'pretransfer' editing and involves the hydrolysis of activated Val-AMP. The other activity is designated 'posttransfer' editing and involves deacylation of mischarged Val-tRNA(Ile). The protein is Isoleucine--tRNA ligase of Bacillus cereus (strain B4264).